A 652-amino-acid chain; its full sequence is DNA mismatch repair protein MutL (652 aa).

The protein belongs to the DNA mismatch repair MutL/HexB family.

In terms of biological role, this protein is involved in the repair of mismatches in DNA. It is required for dam-dependent methyl-directed DNA mismatch repair. May act as a 'molecular matchmaker', a protein that promotes the formation of a stable complex between two or more DNA-binding proteins in an ATP-dependent manner without itself being part of a final effector complex. This is DNA mismatch repair protein MutL from Aliivibrio salmonicida (strain LFI1238) (Vibrio salmonicida (strain LFI1238)).